Consider the following 319-residue polypeptide: Triplex capsid protein 2 (319 aa).

The protein belongs to the herpesviridae TRX2 protein family. As to quaternary structure, interacts with TRX1 and major capisd protein/MCP.

The protein resides in the virion. It localises to the host nucleus. Functionally, structural component of the T=16 icosahedral capsid. The capsid is composed of pentamers and hexamers of major capsid protein/MCP, which are linked together by heterotrimers called triplexes. These triplexes are formed by a single molecule of triplex protein 1/TRX1 and two copies of triplex protein 2/TRX2. Additionally, TRX1 is required for efficient transport of TRX2 to the nucleus, which is the site of capsid assembly. In Gallid herpesvirus 2 (strain Chicken/Md5/ATCC VR-987) (GaHV-2), this protein is Triplex capsid protein 2.